An 89-amino-acid polypeptide reads, in one-letter code: Small ribosomal subunit protein uS14 (89 aa).

Belongs to the universal ribosomal protein uS14 family. As to quaternary structure, part of the 30S ribosomal subunit. Contacts proteins S3 and S10.

Functionally, binds 16S rRNA, required for the assembly of 30S particles and may also be responsible for determining the conformation of the 16S rRNA at the A site. This chain is Small ribosomal subunit protein uS14, found in Akkermansia muciniphila (strain ATCC BAA-835 / DSM 22959 / JCM 33894 / BCRC 81048 / CCUG 64013 / CIP 107961 / Muc).